The following is an 89-amino-acid chain: Long neurotoxin homolog NTL2 (89 aa).

The N-terminal stretch at Met-1 to Thr-21 is a signal peptide. 5 disulfide bridges follow: Cys-24–Cys-45, Cys-27–Cys-32, Cys-38–Cys-66, Cys-70–Cys-81, and Cys-82–Cys-87. A Cell attachment site motif is present at residues Arg-54–Asp-56.

It belongs to the three-finger toxin family. Ancestral subfamily. Orphan group V sub-subfamily. In terms of tissue distribution, expressed by the venom gland.

The protein localises to the secreted. In terms of biological role, exhibits M2 muscarinic acetylcholine receptor (CHRM2)-blocking activity, but has a weak binding activity toward nicotinic AChR. Moreover, it inhibits collagen-induced platelet aggregation. In Bungarus multicinctus (Many-banded krait), this protein is Long neurotoxin homolog NTL2.